The primary structure comprises 1291 residues: Botulinum neurotoxin type B (1291 aa).

Residue H230 coordinates Zn(2+). The active site involves E231. Zn(2+) is bound by residues H234 and E268. An intrachain disulfide couples C437 to C446. The interval 442-857 (APGICIDVDN…ILIEMFNKYN (416 aa)) is translocation domain (TD). The interval 481–532 (YIENDFPINELILDTDLISKIELPSENTESLTDFNVDVPVYEKQPAIKKIFT) is belt. Residues 858-1079 (SEILNNIILN…NIEERYKIQS (222 aa)) form an N-terminus of receptor binding domain (N-RBD) region. The C-terminus of receptor binding domain (C-RBD) stretch occupies residues 1080-1291 (YSEYLKDFWG…FIPKDEGWTE (212 aa)). A Host ganglioside-binding motif motif is present at residues 1260 to 1263 (SKWY).

Belongs to the peptidase M27 family. In terms of assembly, heterodimer; disulfide-linked heterodimer of a light chain (LC) and a heavy chain (HC). Interacts with host synaptic vesicle proteins synaptotagmin-1 and -2 which serve as coreceptors with complex gangliosides. Zn(2+) is required as a cofactor.

The protein localises to the secreted. It localises to the host synapse. It is found in the host presynaptic cell membrane. The protein resides in the host cytoplasm. Its subcellular location is the host cytosol. The protein localises to the host cytoplasmic vesicle. It localises to the host secretory vesicle. It is found in the host synaptic vesicle membrane. The enzyme catalyses Limited hydrolysis of proteins of the neuroexocytosis apparatus, synaptobrevins, SNAP25 or syntaxin. No detected action on small molecule substrates.. In terms of biological role, botulinum toxin causes flaccid paralysis by inhibiting neurotransmitter (acetylcholine) release from the presynaptic membranes of nerve terminals of eukaryotic host skeletal and autonomic nervous system, with frequent heart or respiratory failure. Precursor of botulinum neurotoxin B which has 2 coreceptors; complex polysialylated gangliosides found on neural tissue and specific membrane-anchored proteins found in synaptic vesicles. Receptor proteins are exposed on host presynaptic cell membrane during neurotransmitter release, when the toxin heavy chain (HC) binds to them. Upon synaptic vesicle recycling the toxin is taken up via the endocytic pathway. When the pH of the toxin-containing endosome drops a structural rearrangement occurs so that the N-terminus of the HC forms pores that allows the light chain (LC) to translocate into the cytosol. Once in the cytosol the disulfide bond linking the 2 subunits is reduced and LC cleaves its target protein on synaptic vesicles, preventing their fusion with the cytoplasmic membrane and thus neurotransmitter release. Its function is as follows. Has proteolytic activity. After translocation into the eukaryotic host cytosol, LC hydrolyzes the '76-Gln-|-Phe-77' bond in synaptobrevin-2/VAMP2, blocking neurotransmitter release. Functionally, responsible for host epithelial cell transcytosis, host nerve cell targeting and translocation of light chain (LC) into host cytosol. Composed of 3 subdomains; the translocation domain (TD), and N-terminus and C-terminus of the receptor-binding domain (RBD). The RBD is responsible for the adherence of the toxin to the cell surface. It simultaneously recognizes 2 coreceptors; polysialated gangliosides and host synaptotagmin-1 and -2 (SYT1 and SYT2) which bind simultaneously to adjacent but separate sites at the tip of the HC. The N-terminus of the TD wraps an extended belt around the perimeter of the LC, protecting Zn(2+) in the active site; it may also prevent premature LC dissociation from the translocation channel and protect toxin prior to translocation. The TD inserts into synaptic vesicle membrane to allow translocation into the host cytosol. This is Botulinum neurotoxin type B (botB) from Clostridium botulinum (strain Okra / Type B1).